We begin with the raw amino-acid sequence, 296 residues long: Nucleotide-binding protein SPT_1506 (296 aa).

An ATP-binding site is contributed by 13–20 (GMSGAGKT). 63 to 66 (DMRS) provides a ligand contact to GTP.

It belongs to the RapZ-like family.

Its function is as follows. Displays ATPase and GTPase activities. This is Nucleotide-binding protein SPT_1506 from Streptococcus pneumoniae (strain Taiwan19F-14).